A 172-amino-acid polypeptide reads, in one-letter code: NADH-ubiquinone oxidoreductase chain 6 (172 aa).

6 consecutive transmembrane segments (helical) span residues 1 to 21 (MLSLVLCFFVMFLLGVAVVVL), 25 to 45 (PYFSALGLVFVAVSGCFIVLY), 48 to 68 (GTFLSLVLVLLYLGGMMVVFV), 86 to 106 (VIWFFVICVLCICFAGYMSFN), 108 to 128 (FFLDVSVACEGADYTGGIFGA), and 141 to 161 (LILVLAGWALLVCLFSVLVVV).

This sequence belongs to the complex I subunit 6 family.

Its subcellular location is the mitochondrion membrane. It carries out the reaction a ubiquinone + NADH + 5 H(+)(in) = a ubiquinol + NAD(+) + 4 H(+)(out). Its function is as follows. Core subunit of the mitochondrial membrane respiratory chain NADH dehydrogenase (Complex I) that is believed to belong to the minimal assembly required for catalysis. Complex I functions in the transfer of electrons from NADH to the respiratory chain. The immediate electron acceptor for the enzyme is believed to be ubiquinone. This chain is NADH-ubiquinone oxidoreductase chain 6 (MT-ND6), found in Petromyzon marinus (Sea lamprey).